The sequence spans 254 residues: 3-dehydroquinate dehydratase (254 aa).

3-dehydroquinate contacts are provided by residues glutamate 47–arginine 49 and arginine 83. The active-site Proton donor/acceptor is histidine 144. Residue lysine 171 is the Schiff-base intermediate with substrate of the active site. Residues arginine 213, serine 232, and glutamine 236 each contribute to the 3-dehydroquinate site.

This sequence belongs to the type-I 3-dehydroquinase family. In terms of assembly, homodimer.

The catalysed reaction is 3-dehydroquinate = 3-dehydroshikimate + H2O. It participates in metabolic intermediate biosynthesis; chorismate biosynthesis; chorismate from D-erythrose 4-phosphate and phosphoenolpyruvate: step 3/7. Its function is as follows. Involved in the third step of the chorismate pathway, which leads to the biosynthesis of aromatic amino acids. Catalyzes the cis-dehydration of 3-dehydroquinate (DHQ) and introduces the first double bond of the aromatic ring to yield 3-dehydroshikimate. The polypeptide is 3-dehydroquinate dehydratase (Neisseria meningitidis serogroup C / serotype 2a (strain ATCC 700532 / DSM 15464 / FAM18)).